We begin with the raw amino-acid sequence, 122 residues long: Small ribosomal subunit protein uS13 (122 aa).

The disordered stretch occupies residues 93-122; it reads RRGLPVRGQRTKTNARTRKGPKKTIAGKKK.

This sequence belongs to the universal ribosomal protein uS13 family. As to quaternary structure, part of the 30S ribosomal subunit. Forms a loose heterodimer with protein S19. Forms two bridges to the 50S subunit in the 70S ribosome.

In terms of biological role, located at the top of the head of the 30S subunit, it contacts several helices of the 16S rRNA. In the 70S ribosome it contacts the 23S rRNA (bridge B1a) and protein L5 of the 50S subunit (bridge B1b), connecting the 2 subunits; these bridges are implicated in subunit movement. Contacts the tRNAs in the A and P-sites. This is Small ribosomal subunit protein uS13 from Corynebacterium urealyticum (strain ATCC 43042 / DSM 7109).